The following is a 466-amino-acid chain: ATP-dependent protease ATPase subunit HslU (466 aa).

ATP-binding positions include isoleucine 18, 60–65, aspartate 279, glutamate 344, and arginine 416; that span reads GVGKTE.

It belongs to the ClpX chaperone family. HslU subfamily. As to quaternary structure, a double ring-shaped homohexamer of HslV is capped on each side by a ring-shaped HslU homohexamer. The assembly of the HslU/HslV complex is dependent on binding of ATP.

It is found in the cytoplasm. ATPase subunit of a proteasome-like degradation complex; this subunit has chaperone activity. The binding of ATP and its subsequent hydrolysis by HslU are essential for unfolding of protein substrates subsequently hydrolyzed by HslV. HslU recognizes the N-terminal part of its protein substrates and unfolds these before they are guided to HslV for hydrolysis. In Syntrophomonas wolfei subsp. wolfei (strain DSM 2245B / Goettingen), this protein is ATP-dependent protease ATPase subunit HslU.